A 284-amino-acid chain; its full sequence is Phosphatidylglycerol--prolipoprotein diacylglyceryl transferase (284 aa).

The next 7 membrane-spanning stretches (helical) occupy residues 21–41 (IEVHWYGLAYACAIVVAFYMA), 62–82 (YFLWAELGIVLGARVGYILIY), 106–126 (FVGIRGMSYHGGLVGFLIASY), 136–156 (LLIYLDLIAISLPLGYVFGRI), 190–210 (PSQLIEAFLEGVIVFLMVMWA), 218–238 (GLLIVVYGLGYSLMRFIAEFY), and 252–272 (LSMGQILSLFMVIVSLGILLY). Arg-155 contributes to the a 1,2-diacyl-sn-glycero-3-phospho-(1'-sn-glycerol) binding site.

The protein belongs to the Lgt family.

It localises to the cell inner membrane. The enzyme catalyses L-cysteinyl-[prolipoprotein] + a 1,2-diacyl-sn-glycero-3-phospho-(1'-sn-glycerol) = an S-1,2-diacyl-sn-glyceryl-L-cysteinyl-[prolipoprotein] + sn-glycerol 1-phosphate + H(+). Its pathway is protein modification; lipoprotein biosynthesis (diacylglyceryl transfer). In terms of biological role, catalyzes the transfer of the diacylglyceryl group from phosphatidylglycerol to the sulfhydryl group of the N-terminal cysteine of a prolipoprotein, the first step in the formation of mature lipoproteins. The chain is Phosphatidylglycerol--prolipoprotein diacylglyceryl transferase from Helicobacter pylori (strain P12).